The chain runs to 186 residues: Ribosome-recycling factor (186 aa).

This sequence belongs to the RRF family.

It localises to the cytoplasm. Functionally, responsible for the release of ribosomes from messenger RNA at the termination of protein biosynthesis. May increase the efficiency of translation by recycling ribosomes from one round of translation to another. The chain is Ribosome-recycling factor from Brucella abortus (strain S19).